Here is a 430-residue protein sequence, read N- to C-terminus: Lipoyl synthase, mitochondrial (430 aa).

The transit peptide at 1–37 (MATSAGKLRTLYSAHSSLSSLPPSARPTLQLATLRSY) directs the protein to the mitochondrion. Over residues 39–55 (TTTPHDSPIGNTSNTPP) the composition is skewed to polar residues. The interval 39 to 58 (TTTPHDSPIGNTSNTPPTVK) is disordered. [4Fe-4S] cluster is bound by residues Cys141, Cys146, Cys152, Cys172, Cys176, Cys179, and Ser387. A Radical SAM core domain is found at 155 to 376 (GSSKSAATAT…KERALEMGFL (222 aa)).

Belongs to the radical SAM superfamily. Lipoyl synthase family. It depends on [4Fe-4S] cluster as a cofactor.

The protein resides in the mitochondrion. The catalysed reaction is [[Fe-S] cluster scaffold protein carrying a second [4Fe-4S](2+) cluster] + N(6)-octanoyl-L-lysyl-[protein] + 2 oxidized [2Fe-2S]-[ferredoxin] + 2 S-adenosyl-L-methionine + 4 H(+) = [[Fe-S] cluster scaffold protein] + N(6)-[(R)-dihydrolipoyl]-L-lysyl-[protein] + 4 Fe(3+) + 2 hydrogen sulfide + 2 5'-deoxyadenosine + 2 L-methionine + 2 reduced [2Fe-2S]-[ferredoxin]. It participates in protein modification; protein lipoylation via endogenous pathway; protein N(6)-(lipoyl)lysine from octanoyl-[acyl-carrier-protein]: step 2/2. In terms of biological role, catalyzes the radical-mediated insertion of two sulfur atoms into the C-6 and C-8 positions of the octanoyl moiety bound to the lipoyl domains of lipoate-dependent enzymes, thereby converting the octanoylated domains into lipoylated derivatives. The sequence is that of Lipoyl synthase, mitochondrial from Ajellomyces capsulatus (strain G186AR / H82 / ATCC MYA-2454 / RMSCC 2432) (Darling's disease fungus).